Reading from the N-terminus, the 190-residue chain is Riboflavin transporter FmnP (190 aa).

Residues M1–K5 are Extracellular-facing. A helical transmembrane segment spans residues L6–F26. Residues P27–D39 lie on the Cytoplasmic side of the membrane. Residues V40–I60 traverse the membrane as a helical segment. Over K61–P76 the chain is Extracellular. Residues V77 to F97 form a helical membrane-spanning segment. At K98–S109 the chain is on the cytoplasmic side. The chain crosses the membrane as a helical span at residues L110–L130. Residues P131–G154 lie on the Extracellular side of the membrane. A helical membrane pass occupies residues I155–I175. Topologically, residues K176–H190 are cytoplasmic.

Belongs to the prokaryotic riboflavin transporter (P-RFT) (TC 2.A.87) family. As to quaternary structure, forms a stable energy-coupling factor (ECF) transporter complex composed of a membrane-embedded substrate-binding protein (S component), 2 ATP-binding proteins (A component) and 2 transmembrane proteins (T component). May be able to interact with more than 1 S component at a time.

The protein resides in the cell membrane. Its activity is regulated as follows. Inhibited by excess of riboflavin or FMN. Also inhibited by protonophores such as CCCP and FCCP or in the absence of glucose. Functionally, mediates uptake of riboflavin and roseoflavin, a toxic riboflavin analog; may also transport FMN. Probably a riboflavin-binding protein that interacts with the energy-coupling factor (ECF) ABC-transporter complex. Unlike classic ABC transporters this ECF transporter provides the energy necessary to transport a number of different substrates. The substrates themselves are bound by transmembrane, not extracytoplasmic soluble proteins. The polypeptide is Riboflavin transporter FmnP (fmnP) (Bacillus subtilis (strain 168)).